A 432-amino-acid polypeptide reads, in one-letter code: EF-hand calcium-binding domain-containing protein 3 (432 aa).

EF-hand domains follow at residues 45 to 80 (AQLEAFRNAYNFFTKDRTGCIDSHGLISTIAKLGMN) and 81 to 116 (LNTYDIYNELKCADLDRDGKINFSDFINVLTDKKLF). 5 residues coordinate Ca(2+): aspartate 94, aspartate 96, aspartate 98, lysine 100, and aspartate 105. Tyrosine 273 bears the Phosphotyrosine mark. The disordered stretch occupies residues 394–432 (SMNKSSPSNSGLSSPSDFSESDPETGRKRKRKSSRGFRQ). Residues 395–411 (MNKSSPSNSGLSSPSDF) show a composition bias toward low complexity. Residues 420–432 (RKRKRKSSRGFRQ) show a composition bias toward basic residues.

This Mus musculus (Mouse) protein is EF-hand calcium-binding domain-containing protein 3 (Efcab3).